The following is a 737-amino-acid chain: Alpha-adducin (737 aa).

Position 1 is an N-acetylmethionine (Met-1). Residues 1–21 (MNGDSRAAVVTSPPPTTAPHK) form a disordered region. Phosphoserine is present on Ser-12. A Phosphoserine; by PKA modification is found at Ser-59. A Phosphoserine modification is found at Ser-64. Thr-331 is modified (phosphothreonine). Residues Ser-334, Ser-353, Ser-355, Ser-358, and Ser-366 each carry the phosphoserine modification. Position 408 is a phosphoserine; by PKA (Ser-408). Disordered regions lie at residues 421-486 (FASD…SAVP) and 576-737 (RREV…KSDS). Ser-427 carries the post-translational modification Phosphoserine. At Thr-429 the chain carries Phosphothreonine. Ser-431 is modified (phosphoserine). At Ser-436 the chain carries Phosphoserine; by PKA. The residue at position 445 (Thr-445) is a Phosphothreonine; by ROCK2. Phosphoserine is present on residues Ser-464 and Ser-465. The residue at position 480 (Thr-480) is a Phosphothreonine; by ROCK2. At Ser-481 the chain carries Phosphoserine; by PKA. The span at 576 to 601 (RREVERKQKGSEENLDEAREQKEKSP) shows a compositional bias: basic and acidic residues. Phosphoserine is present on residues Ser-586, Ser-600, and Ser-613. Residues 602–614 (PDQPAVPHPPPST) show a composition bias toward pro residues. The residue at position 614 (Thr-614) is a Phosphothreonine. 4 positions are modified to phosphoserine: Ser-678, Ser-707, Ser-710, and Ser-714. Low complexity predominate over residues 687-714 (PVAEEAAPSAVEEGAAADPGSDGSPGKS). Over residues 715 to 737 (PSKKKKKFRTPSFLKKSKKKSDS) the composition is skewed to basic residues. Phosphoserine; by PKC is present on Ser-716. The interval 717-734 (KKKKKFRTPSFLKKSKKK) is interaction with calmodulin. At Ser-726 the chain carries Phosphoserine; by PKA and PKC.

This sequence belongs to the aldolase class II family. Adducin subfamily. In terms of assembly, heterodimer of an alpha and a beta subunit or an alpha and a gamma subunit. In terms of tissue distribution, expressed in all tissues. Found in much higher levels in reticulocytes than the beta subunit.

Its subcellular location is the cytoplasm. The protein localises to the cytoskeleton. The protein resides in the cell membrane. Functionally, membrane-cytoskeleton-associated protein that promotes the assembly of the spectrin-actin network. Binds to calmodulin. The polypeptide is Alpha-adducin (ADD1) (Homo sapiens (Human)).